The primary structure comprises 31 residues: Cytochrome b6-f complex subunit 6 (31 aa).

Residues 7-25 (YSGFLLAAPIPASAPFTGL) form a helical membrane-spanning segment.

The protein belongs to the PetL family. As to quaternary structure, the 4 large subunits of the cytochrome b6-f complex are cytochrome b6, subunit IV (17 kDa polypeptide, PetD), cytochrome f and the Rieske protein, while the 4 small subunits are PetG, PetL, PetM and PetN. The complex functions as a dimer.

It is found in the plastid. It localises to the chloroplast thylakoid membrane. Component of the cytochrome b6-f complex, which mediates electron transfer between photosystem II (PSII) and photosystem I (PSI), cyclic electron flow around PSI, and state transitions. PetL is important for photoautotrophic growth as well as for electron transfer efficiency and stability of the cytochrome b6-f complex. This is Cytochrome b6-f complex subunit 6 from Huperzia lucidula (Shining clubmoss).